The following is a 188-amino-acid chain: U1 small nuclear ribonucleoprotein C-2 (188 aa).

The Matrin-type zinc-finger motif lies at 4–36 (YYCDYCDVFLVSESPSVRKAHNSGRNHLTNVRD). The interval 57-188 (FETGGGNSTS…MNPDRARQLG (132 aa)) is disordered. A compositionally biased stretch (pro residues) spans 72-82 (GNPPGSQPGPP). The segment covering 109 to 124 (AMLALMNGQNGMSSPG) has biased composition (low complexity). Positions 125 to 141 (SGPPPMRFAGPPIPNNM) are enriched in pro residues.

Belongs to the U1 small nuclear ribonucleoprotein C family. As to quaternary structure, U1 snRNP is composed of the 7 core Sm proteins B/B', D1, D2, D3, E, F and G that assemble in a heptameric protein ring on the Sm site of the small nuclear RNA to form the core snRNP, and at least 3 U1 snRNP-specific proteins U1-70K, U1-A and U1-C. U1-C interacts with U1 snRNA and the 5' splice-site region of the pre-mRNA.

Its subcellular location is the nucleus. In terms of biological role, component of the spliceosomal U1 snRNP, which is essential for recognition of the pre-mRNA 5' splice-site and the subsequent assembly of the spliceosome. U1-C is directly involved in initial 5' splice-site recognition for both constitutive and regulated alternative splicing. The interaction with the 5' splice-site seems to precede base-pairing between the pre-mRNA and the U1 snRNA. Stimulates commitment or early (E) complex formation by stabilizing the base pairing of the 5' end of the U1 snRNA and the 5' splice-site region. The protein is U1 small nuclear ribonucleoprotein C-2 of Puccinia graminis f. sp. tritici (strain CRL 75-36-700-3 / race SCCL) (Black stem rust fungus).